Here is a 409-residue protein sequence, read N- to C-terminus: uncharacterized protein (409 aa).

In terms of domain architecture, OBG-type G spans 5–274 (ILIGFVGKPS…LAKQGFVKYE (270 aa)). GTP contacts are provided by residues 11–18 (GKPSSGKS) and 83–87 (DVAGL).

This sequence belongs to the TRAFAC class OBG-HflX-like GTPase superfamily. OBG GTPase family.

Its subcellular location is the cytoplasm. It localises to the nucleus. This is an uncharacterized protein from Schizosaccharomyces pombe (strain 972 / ATCC 24843) (Fission yeast).